A 364-amino-acid chain; its full sequence is Growth hormone secretagogue receptor type 1 (364 aa).

Residues 1–40 (MWNATPSEEPEPNVTLDLDWDASPGNDSLSDELLPLFPAP) are Extracellular-facing. N-linked (GlcNAc...) asparagine glycosylation is found at Asn13 and Asn26. Residues 41–66 (LLAGVTATCVALFVVGISGNLLTMLV) traverse the membrane as a helical segment. Topologically, residues 67 to 72 (VSRFRE) are cytoplasmic. The helical transmembrane segment at 73–96 (LRTTTNLYLSSMAFSDLLIFLCMP) threads the bilayer. Residues 97 to 117 (LDLVRLWQYRPWNFGDLLCKL) lie on the Extracellular side of the membrane. A disulfide bond links Cys115 and Cys197. A helical transmembrane segment spans residues 118 to 139 (FQFVSESCTYATVLTITALSVE). Residues 140–162 (RYFAICFPLRAKVVVTKGRVKLV) lie on the Cytoplasmic side of the membrane. The chain crosses the membrane as a helical span at residues 163 to 183 (ILVIWAVAFCSAGPIFVLVGV). Residues 184–211 (EHENGTDPRDTNECRATEFAVRSGLLTV) are Extracellular-facing. Asn187 carries an N-linked (GlcNAc...) asparagine glycan. The chain crosses the membrane as a helical span at residues 212 to 235 (MVWVSSVFFFLPVFCLTVLYSLIG). Residues 236–263 (RKLWRRRGDAAVGSSLRDQNHKQTVKML) lie on the Cytoplasmic side of the membrane. The chain crosses the membrane as a helical span at residues 264-285 (AVVVFAFILCWLPFHVGRYLFS). Topologically, residues 286–302 (KSFEPGSLEIAQISQYC) are extracellular. Residues 303–326 (NLVSFVLFYLSAAINPILYNIMSK) traverse the membrane as a helical segment. The Cytoplasmic portion of the chain corresponds to 327 to 364 (KYRVAVFKLLGFESFSQRKLSTLKDESSRAWTKSSINT).

This sequence belongs to the G-protein coupled receptor 1 family.

It is found in the cell membrane. Functionally, receptor for ghrelin, coupled to G-alpha-11 proteins. Stimulates growth hormone secretion. Also binds other growth hormone releasing peptides (GHRP) (e.g. Met-enkephalin and GHRP-6) as well as non-peptide, low molecular weight secretagogues (e.g. L-692,429, MK-0677, adenosine). This Mus musculus (Mouse) protein is Growth hormone secretagogue receptor type 1 (Ghsr).